The primary structure comprises 125 residues: Protein ApaG (125 aa).

Residues 1-125 form the ApaG domain; that stretch reads MIDSPRVCVQ…FRLAVPTFIH (125 aa).

The polypeptide is Protein ApaG (Enterobacter sp. (strain 638)).